Here is a 113-residue protein sequence, read N- to C-terminus: Putative pterin-4-alpha-carbinolamine dehydratase (113 aa).

Belongs to the pterin-4-alpha-carbinolamine dehydratase family.

It carries out the reaction (4aS,6R)-4a-hydroxy-L-erythro-5,6,7,8-tetrahydrobiopterin = (6R)-L-erythro-6,7-dihydrobiopterin + H2O. The sequence is that of Putative pterin-4-alpha-carbinolamine dehydratase from Hydrogenovibrio crunogenus (strain DSM 25203 / XCL-2) (Thiomicrospira crunogena).